Consider the following 92-residue polypeptide: Small ribosomal subunit protein uS19c (92 aa).

The protein belongs to the universal ribosomal protein uS19 family.

The protein resides in the plastid. It is found in the chloroplast. Functionally, protein S19 forms a complex with S13 that binds strongly to the 16S ribosomal RNA. The protein is Small ribosomal subunit protein uS19c of Angiopteris evecta (Mule's foot fern).